We begin with the raw amino-acid sequence, 526 residues long: Peptide chain release factor 3 (526 aa).

One can recognise a tr-type G domain in the interval 8 to 277 (SKRRTFAIIS…GLTRWAPAPQ (270 aa)). GTP is bound by residues 17–24 (SHPDAGKT), 85–89 (DTPGH), and 139–142 (NKLD).

It belongs to the TRAFAC class translation factor GTPase superfamily. Classic translation factor GTPase family. PrfC subfamily.

The protein resides in the cytoplasm. Increases the formation of ribosomal termination complexes and stimulates activities of RF-1 and RF-2. It binds guanine nucleotides and has strong preference for UGA stop codons. It may interact directly with the ribosome. The stimulation of RF-1 and RF-2 is significantly reduced by GTP and GDP, but not by GMP. This chain is Peptide chain release factor 3, found in Vibrio atlanticus (strain LGP32) (Vibrio splendidus (strain Mel32)).